The following is a 199-amino-acid chain: FMN-dependent NADH:quinone oxidoreductase 2 (199 aa).

Residues Ser10, Ser16 to Ser18, and Met96 to Phe99 contribute to the FMN site.

Belongs to the azoreductase type 1 family. In terms of assembly, homodimer. It depends on FMN as a cofactor.

The enzyme catalyses 2 a quinone + NADH + H(+) = 2 a 1,4-benzosemiquinone + NAD(+). It carries out the reaction N,N-dimethyl-1,4-phenylenediamine + anthranilate + 2 NAD(+) = 2-(4-dimethylaminophenyl)diazenylbenzoate + 2 NADH + 2 H(+). Quinone reductase that provides resistance to thiol-specific stress caused by electrophilic quinones. Its function is as follows. Also exhibits azoreductase activity. Catalyzes the reductive cleavage of the azo bond in aromatic azo compounds to the corresponding amines. This chain is FMN-dependent NADH:quinone oxidoreductase 2, found in Pseudomonas fluorescens (strain ATCC BAA-477 / NRRL B-23932 / Pf-5).